The chain runs to 124 residues: MPTIQQLVRKGREDKVVKTKTPALKGSPQRRGVCTRVYTTTPKKPNSALRKVARVKLTSGIEVTAYIPGVGHNLQEHSMVLVRGGRVKDLPGVRYKIVRGSLDTQGVKNRKQARSRYGAKKEKS.

Residues 1 to 32 (MPTIQQLVRKGREDKVVKTKTPALKGSPQRRG) form a disordered region. Asp89 is modified (3-methylthioaspartic acid). Residues 105–124 (QGVKNRKQARSRYGAKKEKS) form a disordered region. The segment covering 108-118 (KNRKQARSRYG) has biased composition (basic residues).

This sequence belongs to the universal ribosomal protein uS12 family. Part of the 30S ribosomal subunit. Contacts proteins S8 and S17. May interact with IF1 in the 30S initiation complex.

Its function is as follows. With S4 and S5 plays an important role in translational accuracy. In terms of biological role, interacts with and stabilizes bases of the 16S rRNA that are involved in tRNA selection in the A site and with the mRNA backbone. Located at the interface of the 30S and 50S subunits, it traverses the body of the 30S subunit contacting proteins on the other side and probably holding the rRNA structure together. The combined cluster of proteins S8, S12 and S17 appears to hold together the shoulder and platform of the 30S subunit. This is Small ribosomal subunit protein uS12 from Kineococcus radiotolerans (strain ATCC BAA-149 / DSM 14245 / SRS30216).